The primary structure comprises 563 residues: Ribulokinase (563 aa).

The protein belongs to the ribulokinase family.

The catalysed reaction is D-ribulose + ATP = D-ribulose 5-phosphate + ADP + H(+). The enzyme catalyses L-ribulose + ATP = L-ribulose 5-phosphate + ADP + H(+). It participates in carbohydrate degradation; L-arabinose degradation via L-ribulose; D-xylulose 5-phosphate from L-arabinose (bacterial route): step 2/3. The chain is Ribulokinase from Halalkalibacterium halodurans (strain ATCC BAA-125 / DSM 18197 / FERM 7344 / JCM 9153 / C-125) (Bacillus halodurans).